The primary structure comprises 258 residues: L-aspartate dehydrogenase 1 (258 aa).

Residues alanine 121 and asparagine 181 each coordinate NAD(+). Residue histidine 211 is part of the active site.

It belongs to the L-aspartate dehydrogenase family.

The enzyme catalyses L-aspartate + NADP(+) + H2O = oxaloacetate + NH4(+) + NADPH + H(+). It catalyses the reaction L-aspartate + NAD(+) + H2O = oxaloacetate + NH4(+) + NADH + H(+). It functions in the pathway cofactor biosynthesis; NAD(+) biosynthesis; iminoaspartate from L-aspartate (dehydrogenase route): step 1/1. Functionally, specifically catalyzes the NAD or NADP-dependent dehydrogenation of L-aspartate to iminoaspartate. The polypeptide is L-aspartate dehydrogenase 1 (Bordetella bronchiseptica (strain ATCC BAA-588 / NCTC 13252 / RB50) (Alcaligenes bronchisepticus)).